Consider the following 522-residue polypeptide: Target of rapamycin complex 2 subunit MAPKAP1 (522 aa).

Residues 43–62 (PSSTYGDSASETQGSNGETQ) form a disordered region. One can recognise a CRIM domain in the interval 139-267 (QSILSVRLEQ…GFSTLALVEK (129 aa)). The SIN1-type RBD stretch occupies residues 279-353 (LFVRINAAHG…QSTLEFCLVR (75 aa)). The interval 310–330 (KRRKGSQRGSGPQYRLEKQSE) is disordered. One can recognise an SIN1-type PH domain in the interval 382–487 (HYKSFKVSMI…IVLKVNYILE (106 aa)). Arg-393, Lys-428, and Lys-464 together coordinate a 1,2-diacyl-sn-glycero-3-phospho-(1D-myo-inositol-3,4,5-trisphosphate).

The protein belongs to the SIN1 family. Component of the mechanistic target of rapamycin complex 2 (mTORC2), consisting in two heterotretramers composed of MTOR, MLST8, RICTOR and MAPKAP1/SIN1. Contrary to mTORC1, mTORC2 does not bind to and is not sensitive to FKBP12-rapamycin.

The protein localises to the cell membrane. It localises to the endoplasmic reticulum membrane. The protein resides in the early endosome membrane. It is found in the late endosome membrane. Its subcellular location is the lysosome membrane. The protein localises to the golgi apparatus membrane. It localises to the mitochondrion outer membrane. The protein resides in the cytoplasm. It is found in the perinuclear region. Its subcellular location is the nucleus. Phosphatidylinositol 3,4,5-trisphosphate (PI(3,4,5)P3) promotes MTOR activation by relieving MAPKAP1/SIN1-mediated inhibition of MTOR that takes place in absence of PI(3,4,5)P3. Functionally, component of the mechanistic target of rapamycin complex 2 (mTORC2), which transduces signals from growth factors to pathways involved in proliferation, cytoskeletal organization, lipogenesis and anabolic output. In response to growth factors, mTORC2 phosphorylates and activates AGC protein kinase family members, including AKT (AKT1, AKT2 and AKT3), PKC (PRKCA, PRKCB and PRKCE) and SGK1. In contrast to mTORC1, mTORC2 is nutrient-insensitive. Within the mTORC2 complex, MAPKAP1/SIN1 acts as a substrate adapter which recognizes and binds AGC protein kinase family members for phosphorylation by MTOR. The protein is Target of rapamycin complex 2 subunit MAPKAP1 (MAPKAP1) of Gallus gallus (Chicken).